The primary structure comprises 300 residues: uncharacterized protein (300 aa).

A compositionally biased stretch (basic and acidic residues) spans 1 to 19 (MATKRAHPEDETHESKRAA). Positions 1–20 (MATKRAHPEDETHESKRAAQ) are disordered.

This is an uncharacterized protein from Orgyia pseudotsugata multicapsid polyhedrosis virus (OpMNPV).